A 189-amino-acid polypeptide reads, in one-letter code: Protein GrpE (189 aa).

The interval 1-24 (MADEQNLDTQNPEAQAAENAAPSD) is disordered. The span at 10-24 (QNPEAQAAENAAPSD) shows a compositional bias: low complexity.

This sequence belongs to the GrpE family. In terms of assembly, homodimer.

It is found in the cytoplasm. Its function is as follows. Participates actively in the response to hyperosmotic and heat shock by preventing the aggregation of stress-denatured proteins, in association with DnaK and GrpE. It is the nucleotide exchange factor for DnaK and may function as a thermosensor. Unfolded proteins bind initially to DnaJ; upon interaction with the DnaJ-bound protein, DnaK hydrolyzes its bound ATP, resulting in the formation of a stable complex. GrpE releases ADP from DnaK; ATP binding to DnaK triggers the release of the substrate protein, thus completing the reaction cycle. Several rounds of ATP-dependent interactions between DnaJ, DnaK and GrpE are required for fully efficient folding. This is Protein GrpE from Ectopseudomonas mendocina (strain ymp) (Pseudomonas mendocina).